The sequence spans 494 residues: Neuronal acetylcholine receptor subunit alpha-6 (494 aa).

Positions 1–31 (MHPKRRLCWCLPASGAWAFMLTSLIADTTAC) are cleaved as a signal peptide. Residues 32–240 (ESEERLFHKL…TYSFYIRRLP (209 aa)) are Extracellular-facing. 2 N-linked (GlcNAc...) asparagine glycosylation sites follow: Asn-54 and Asn-171. An intrachain disulfide couples Cys-158 to Cys-172. Helical transmembrane passes span 241-265 (MFYT…FYLP), 272-290 (VTLC…LVIT), and 306-327 (YLLF…VLNI). At 328–468 (HYRTPTTHTM…WKYVAMVIDR (141 aa)) the chain is on the cytoplasmic side. The disordered stretch occupies residues 364–390 (KNISKKTKKGSAKTSGKSKHSKHKDNK). A compositionally biased stretch (basic residues) spans 366–390 (ISKKTKKGSAKTSGKSKHSKHKDNK). A helical membrane pass occupies residues 469–489 (VFLWVFIILCVFGTAGLFIQP).

The protein belongs to the ligand-gated ion channel (TC 1.A.9) family. Acetylcholine receptor (TC 1.A.9.1) subfamily. Alpha-6/CHRNA6 sub-subfamily. As to quaternary structure, neuronal AChR is composed of two different types of subunits: alpha and non-alpha (beta). CHRNA6/alpha-6 subunit can be combined to CHRNB2/beta-2, CHRNA4/alpha-4 and CHRNB3/beta-3 to give rise to functional receptors. Heteropentamers containing CHRNB3 have an stoichiometry of (CHRNA6:CHRNB2)2:CHRNB3. Interacts with LYPD6.

Its subcellular location is the synaptic cell membrane. It carries out the reaction K(+)(in) = K(+)(out). The enzyme catalyses Na(+)(in) = Na(+)(out). The catalysed reaction is Ca(2+)(in) = Ca(2+)(out). Activated by a myriad of ligands such as acetylcholine, cytisine and nicotine. CHRNA6 nAChR activity is inhibited by the antagonists alpha-conotoxin MII and PIA, a small disulfide-constrained peptides from cone snails. In terms of biological role, component of neuronal acetylcholine receptors (nAChRs) that function as pentameric, ligand-gated cation channels with high calcium permeability among other activities. nAChRs are excitatory neurotrasnmitter receptors formed by a collection of nAChR subunits known to mediate synaptic transmission in the nervous system and the neuromuscular junction. Each nAchR subunit confers differential attributes to channel properties, including activation, deactivation and desensitization kinetics, pH sensitivity, cation permeability, and binding to allosteric modulators. CHRNA6 forms pentameric channels with CHRNB2 and CHRNA4 that exhibit high sensitivity to ACh and nicotine and are predominantly expressed in only a few brain areas, including dopaminergic neurons, norepirephrine neurons and cells of the visual system. nAChrs containing CHRNA6 subunits mediate endogenous cholinergic modulation of dopamine and gamma-aminobutyric acid (GABA) release in response to nicotine at nerve terminals. Its function is as follows. Component of neuronal acetylcholine receptors (nAChRs) that function as pentameric, ligand-gated cation channels with high calcium permeability among other activities. nAChRs are excitatory neurotrasnmitter receptors formed by a collection of nAChR subunits known to mediate synaptic transmission in the nervous system and the neuromuscular junction. Each nAchR subunit confers differential attributes to channel properties, including activation, deactivation and desensitization kinetics, pH sensitivity, cation permeability, and binding to allosteric modulators. CHRNA6 forms pentameric channels with CHRNB2, CHRNB3 and CHRNA4 that exhibit high sensitivity to ACh and nicotine and are predominantly expressed in only a few brain areas, including dopaminergic neurons, norepirephrine neurons and cells of the visual system. nAChrs containing CHRNA6 subunits mediate endogenous cholinergic modulation of dopamine and gamma-aminobutyric acid (GABA) release in response to nicotine at nerve terminals. This chain is Neuronal acetylcholine receptor subunit alpha-6 (CHRNA6), found in Gallus gallus (Chicken).